The primary structure comprises 798 residues: uncharacterized protein (798 aa).

The segment at 432–573 (KLTDNLSNKS…KNKAYRGRRV (142 aa)) is disordered. Low complexity-rich tracts occupy residues 438 to 449 (SNKSSNDNTSET), 456 to 465 (RSSNSRNSDN), 473 to 487 (SKTQ…SRIP), and 495 to 510 (STNS…SDVY). Over residues 519–529 (PSRSTYKSRTI) the composition is skewed to polar residues. A compositionally biased stretch (low complexity) spans 535–547 (ESSPVSSRTSSPV). Basic and acidic residues predominate over residues 548 to 562 (DDSRLKQSRISEDKP). Basic residues predominate over residues 563–572 (RKNKAYRGRR).

Its subcellular location is the virion. This is an uncharacterized protein from Acanthamoeba polyphaga (Amoeba).